We begin with the raw amino-acid sequence, 661 residues long: UvrABC system protein B (661 aa).

The 156-residue stretch at 31–186 folds into the Helicase ATP-binding domain; that stretch reads DNIEGGEKAQ…LLNALVDIQF (156 aa). 44-51 is a binding site for ATP; the sequence is GATGTGKT. The Beta-hairpin motif lies at 97 to 120; it reads YYDYYQPEAYVPSSDTYIEKDSSV. The Helicase C-terminal domain maps to 435–601; that stretch reads QMDDLLGEIN…TIKKEIRDLI (167 aa). The region spanning 626 to 661 is the UVR domain; that stretch reads KAMIKKLEGQMQEAAEVLDFELAAQIRDMVIELKNM.

Belongs to the UvrB family. Forms a heterotetramer with UvrA during the search for lesions. Interacts with UvrC in an incision complex.

Its subcellular location is the cytoplasm. Its function is as follows. The UvrABC repair system catalyzes the recognition and processing of DNA lesions. A damage recognition complex composed of 2 UvrA and 2 UvrB subunits scans DNA for abnormalities. Upon binding of the UvrA(2)B(2) complex to a putative damaged site, the DNA wraps around one UvrB monomer. DNA wrap is dependent on ATP binding by UvrB and probably causes local melting of the DNA helix, facilitating insertion of UvrB beta-hairpin between the DNA strands. Then UvrB probes one DNA strand for the presence of a lesion. If a lesion is found the UvrA subunits dissociate and the UvrB-DNA preincision complex is formed. This complex is subsequently bound by UvrC and the second UvrB is released. If no lesion is found, the DNA wraps around the other UvrB subunit that will check the other stand for damage. In Streptococcus suis (strain 98HAH33), this protein is UvrABC system protein B.